A 486-amino-acid chain; its full sequence is Glutamyl-tRNA(Gln) amidotransferase subunit A (486 aa).

Active-site charge relay system residues include Lys76 and Ser151. Residue Ser175 is the Acyl-ester intermediate of the active site.

This sequence belongs to the amidase family. GatA subfamily. In terms of assembly, heterotrimer of A, B and C subunits.

It carries out the reaction L-glutamyl-tRNA(Gln) + L-glutamine + ATP + H2O = L-glutaminyl-tRNA(Gln) + L-glutamate + ADP + phosphate + H(+). In terms of biological role, allows the formation of correctly charged Gln-tRNA(Gln) through the transamidation of misacylated Glu-tRNA(Gln) in organisms which lack glutaminyl-tRNA synthetase. The reaction takes place in the presence of glutamine and ATP through an activated gamma-phospho-Glu-tRNA(Gln). This Nitrosomonas eutropha (strain DSM 101675 / C91 / Nm57) protein is Glutamyl-tRNA(Gln) amidotransferase subunit A.